A 473-amino-acid polypeptide reads, in one-letter code: Putative amidase AmiC (473 aa).

Catalysis depends on charge relay system residues K82 and S157. S181 (acyl-ester intermediate) is an active-site residue.

It belongs to the amidase family.

It catalyses the reaction a monocarboxylic acid amide + H2O = a monocarboxylate + NH4(+). This is Putative amidase AmiC (amiC) from Mycobacterium bovis (strain ATCC BAA-935 / AF2122/97).